A 509-amino-acid polypeptide reads, in one-letter code: DNA nucleotidylexotransferase (509 aa).

The disordered stretch occupies residues 1-25 (MDPLCTASSGPRKKRPRQVGASMAS). A Nuclear localization signal motif is present at residues 11–17 (PRKKRPR). The BRCT domain maps to 27 to 124 (PHDIKFQNLV…KPVEITGKHQ (98 aa)). Residues 151-509 (SQYACQRKTT…DYIEPWERNA (359 aa)) are mediates interaction with DNTTIP2. Positions 258 to 262 (VGLKT) are involved in DNA binding. A 2'-deoxyribonucleoside 5'-triphosphate-binding positions include 333 to 338 (GFRRGK) and 342 to 345 (HDVD). Mg(2+) is bound by residues aspartate 343, aspartate 345, and aspartate 433. Residue 448 to 449 (GW) participates in a 2'-deoxyribonucleoside 5'-triphosphate binding.

This sequence belongs to the DNA polymerase type-X family. Interacts with PRP19 and DNTTIP1. Forms a ternary complex with DNTTIP2 and core histone. Released from this complex by PCNA. Interacts with TRERF1. Mg(2+) serves as cofactor.

The protein localises to the nucleus. It catalyses the reaction DNA(n) + a 2'-deoxyribonucleoside 5'-triphosphate = DNA(n+1) + diphosphate. Template-independent DNA polymerase which catalyzes the random addition of deoxynucleoside 5'-triphosphate to the 3'-end of a DNA initiator. One of the in vivo functions of this enzyme is the addition of nucleotides at the junction (N region) of rearranged Ig heavy chain and T-cell receptor gene segments during the maturation of B- and T-cells. This chain is DNA nucleotidylexotransferase (DNTT), found in Bos taurus (Bovine).